Here is a 417-residue protein sequence, read N- to C-terminus: UDP-N-acetylglucosamine 1-carboxyvinyltransferase (417 aa).

22–23 (KN) is a binding site for phosphoenolpyruvate. Arg93 is a UDP-N-acetyl-alpha-D-glucosamine binding site. Cys117 serves as the catalytic Proton donor. Position 117 is a 2-(S-cysteinyl)pyruvic acid O-phosphothioketal (Cys117). UDP-N-acetyl-alpha-D-glucosamine is bound by residues 122 to 126 (RPVDQ), Asp305, and Ile327.

The protein belongs to the EPSP synthase family. MurA subfamily.

It localises to the cytoplasm. The enzyme catalyses phosphoenolpyruvate + UDP-N-acetyl-alpha-D-glucosamine = UDP-N-acetyl-3-O-(1-carboxyvinyl)-alpha-D-glucosamine + phosphate. The protein operates within cell wall biogenesis; peptidoglycan biosynthesis. In terms of biological role, cell wall formation. Adds enolpyruvyl to UDP-N-acetylglucosamine. This Nitrosomonas eutropha (strain DSM 101675 / C91 / Nm57) protein is UDP-N-acetylglucosamine 1-carboxyvinyltransferase.